A 50-amino-acid chain; its full sequence is MQTLSSAPDPAVSVAVTILAVLLALTGFGLWTAFGPKAAKLTDPWDDHDD.

Residues 14 to 34 (VAVTILAVLLALTGFGLWTAF) traverse the membrane as a helical segment.

Belongs to the PsbN family.

It localises to the cellular thylakoid membrane. Functionally, may play a role in photosystem I and II biogenesis. This chain is Protein PsbN, found in Prochlorococcus marinus subsp. pastoris (strain CCMP1986 / NIES-2087 / MED4).